An 870-amino-acid chain; its full sequence is Aldehyde-alcohol dehydrogenase 2 (870 aa).

The active site involves cysteine 252. 431–436 lines the NAD(+) pocket; that stretch reads GCGSYG.

It in the N-terminal section; belongs to the aldehyde dehydrogenase family. In the C-terminal section; belongs to the iron-containing alcohol dehydrogenase family. As to quaternary structure, seems to form a rod shaped homomer composed of at least 20 identical subunits. Zn(2+) is required as a cofactor. Requires Fe(2+) as cofactor.

It carries out the reaction a primary alcohol + NAD(+) = an aldehyde + NADH + H(+). The enzyme catalyses a secondary alcohol + NAD(+) = a ketone + NADH + H(+). The catalysed reaction is acetaldehyde + NAD(+) + CoA = acetyl-CoA + NADH + H(+). Its function is as follows. This enzyme has two NAD(+)-dependent activities: ADH and ACDH. May be a critical enzyme in the fermentative pathway. This chain is Aldehyde-alcohol dehydrogenase 2 (ADH2), found in Entamoeba histolytica (strain ATCC 30459 / HM-1:IMSS / ABRM).